The chain runs to 129 residues: Small ribosomal subunit protein uS11 (129 aa).

The protein belongs to the universal ribosomal protein uS11 family. As to quaternary structure, part of the 30S ribosomal subunit. Interacts with proteins S7 and S18. Binds to IF-3.

In terms of biological role, located on the platform of the 30S subunit, it bridges several disparate RNA helices of the 16S rRNA. Forms part of the Shine-Dalgarno cleft in the 70S ribosome. The sequence is that of Small ribosomal subunit protein uS11 from Halalkalibacterium halodurans (strain ATCC BAA-125 / DSM 18197 / FERM 7344 / JCM 9153 / C-125) (Bacillus halodurans).